A 539-amino-acid chain; its full sequence is Chaperone Ric-8A (539 aa).

It belongs to the synembryn family.

It localises to the cytoplasm. The protein resides in the cell cortex. In terms of biological role, chaperone that specifically binds and folds nascent G alpha proteins prior to G protein heterotrimer formation, promoting their stability and activity: folds GNAI1, GNAO1, GNA13 and GNAQ. Does not fold G(s) G-alpha proteins GNAS nor GNAL. Also acts as a guanine nucleotide exchange factor (GEF) for G alpha proteins by stimulating exchange of bound GDP for free GTP. This chain is Chaperone Ric-8A (ric8a), found in Xenopus tropicalis (Western clawed frog).